Reading from the N-terminus, the 256-residue chain is uncharacterized protein (256 aa).

2 disordered regions span residues 1-38 and 51-75; these read MGKT…PNRD and PRPS…RCPQ.

This is an uncharacterized protein from Homo sapiens (Human).